The primary structure comprises 114 residues: T cell receptor beta variable 6-4 (114 aa).

The N-terminal stretch at methionine 1–alanine 21 is a signal peptide. The Ig-like domain maps to glycine 22–aspartate 114. A disulfide bridge connects residues cysteine 42 and cysteine 110.

As to quaternary structure, alpha-beta TR is a heterodimer composed of an alpha and beta chain; disulfide-linked. The alpha-beta TR is associated with the transmembrane signaling CD3 coreceptor proteins to form the TR-CD3 (TcR or TCR). The assembly of alpha-beta TR heterodimers with CD3 occurs in the endoplasmic reticulum where a single alpha-beta TR heterodimer associates with one CD3D-CD3E heterodimer, one CD3G-CD3E heterodimer and one CD247 homodimer forming a stable octameric structure. CD3D-CD3E and CD3G-CD3E heterodimers preferentially associate with TR alpha and TR beta chains, respectively. The association of the CD247 homodimer is the last step of TcR assembly in the endoplasmic reticulum and is required for transport to the cell surface.

The protein resides in the cell membrane. Functionally, v region of the variable domain of T cell receptor (TR) beta chain that participates in the antigen recognition. Alpha-beta T cell receptors are antigen specific receptors which are essential to the immune response and are present on the cell surface of T lymphocytes. Recognize peptide-major histocompatibility (MH) (pMH) complexes that are displayed by antigen presenting cells (APC), a prerequisite for efficient T cell adaptive immunity against pathogens. Binding of alpha-beta TR to pMH complex initiates TR-CD3 clustering on the cell surface and intracellular activation of LCK that phosphorylates the ITAM motifs of CD3G, CD3D, CD3E and CD247 enabling the recruitment of ZAP70. In turn ZAP70 phosphorylates LAT, which recruits numerous signaling molecules to form the LAT signalosome. The LAT signalosome propagates signal branching to three major signaling pathways, the calcium, the mitogen-activated protein kinase (MAPK) kinase and the nuclear factor NF-kappa-B (NF-kB) pathways, leading to the mobilization of transcription factors that are critical for gene expression and essential for T cell growth and differentiation. The T cell repertoire is generated in the thymus, by V-(D)-J rearrangement. This repertoire is then shaped by intrathymic selection events to generate a peripheral T cell pool of self-MH restricted, non-autoaggressive T cells. Post-thymic interaction of alpha-beta TR with the pMH complexes shapes TR structural and functional avidity. This is T cell receptor beta variable 6-4 from Homo sapiens (Human).